We begin with the raw amino-acid sequence, 416 residues long: Gamma-glutamyl phosphate reductase (416 aa).

The protein belongs to the gamma-glutamyl phosphate reductase family.

Its subcellular location is the cytoplasm. The enzyme catalyses L-glutamate 5-semialdehyde + phosphate + NADP(+) = L-glutamyl 5-phosphate + NADPH + H(+). It functions in the pathway amino-acid biosynthesis; L-proline biosynthesis; L-glutamate 5-semialdehyde from L-glutamate: step 2/2. Its function is as follows. Catalyzes the NADPH-dependent reduction of L-glutamate 5-phosphate into L-glutamate 5-semialdehyde and phosphate. The product spontaneously undergoes cyclization to form 1-pyrroline-5-carboxylate. This is Gamma-glutamyl phosphate reductase from Streptococcus pyogenes serotype M6 (strain ATCC BAA-946 / MGAS10394).